A 398-amino-acid polypeptide reads, in one-letter code: MSGRVFLLLALVALASAIQRIKLEKRTYTREQYKFGSIQEHLKAKYVPGYIPNKDAFNEGLSDYSNAQYYGPVTIGTPPQNFQVLFDTGSSNLWVPCANCPFGDIACRMHNRFDCKKSSSCTATGASFEIQYGTGSMKGTVDNDVVCFGHDTTYCTDKNQGLACATSEPGITFVAAKFDGIFGMGWDTISVNKISQPMDQIFANSAICKNQLFAFWLSRDANDITNGGEITLCDTDPNHYVGNIAWEPLVSEDYWRIKLASVVIDGTTYTSGPIDSIVDTGTSLLTGPTDVIKKIQHKIGGIPLFNGEYEVECSKIPSLPNITFNLGGQNFDLQGKDYILQMSNGNGGSTCLSGFMGMDIPAPAGPLWILGDVFIGRFYSVFDHGNKRVGFATSRTGK.

An N-terminal signal peptide occupies residues 1–17 (MSGRVFLLLALVALASA). Positions 18 to 55 (IQRIKLEKRTYTREQYKFGSIQEHLKAKYVPGYIPNKD) are cleaved as a propeptide — removed in mature form. In terms of domain architecture, Peptidase A1 spans 69–392 (YYGPVTIGTP…DHGNKRVGFA (324 aa)). D87 is a catalytic residue. C100 and C107 form a disulfide bridge. D279 is an active-site residue. C313 and C351 are oxidised to a cystine. N321 carries an N-linked (GlcNAc...) asparagine glycan.

The protein belongs to the peptidase A1 family. As to expression, highly expressed in intestine and to a lower extent in body wall muscles, hypodermis and neurons.

Its subcellular location is the cytoplasm. The protein localises to the lysosome. It localises to the secreted. In terms of biological role, aspartic protease. Part of the necrosis cell death pathway. Involved in neuronal cell degeneration. Involved in heat stress response. The polypeptide is Aspartic protease 3 (Caenorhabditis elegans).